The chain runs to 139 residues: Protein GOS9 (139 aa).

In terms of domain architecture, Jacalin-type lectin spans L5 to I139.

As to expression, expressed mainly in roots.

This is Protein GOS9 (GOS9) from Oryza sativa subsp. indica (Rice).